The primary structure comprises 622 residues: Phosphomethylpyrimidine synthase (622 aa).

Residues 109–130 (EPISNNNNDRQSSDKQLSFTTN) form a disordered region. Residues Asn-234, Met-263, Tyr-292, His-328, 348-350 (SRG), 389-392 (DGLR), and Glu-428 contribute to the substrate site. His-432 lines the Zn(2+) pocket. Tyr-455 is a substrate binding site. His-496 contributes to the Zn(2+) binding site. [4Fe-4S] cluster is bound by residues Cys-576, Cys-579, and Cys-584.

It belongs to the ThiC family. As to quaternary structure, homodimer. It depends on [4Fe-4S] cluster as a cofactor.

The enzyme catalyses 5-amino-1-(5-phospho-beta-D-ribosyl)imidazole + S-adenosyl-L-methionine = 4-amino-2-methyl-5-(phosphooxymethyl)pyrimidine + CO + 5'-deoxyadenosine + formate + L-methionine + 3 H(+). It functions in the pathway cofactor biosynthesis; thiamine diphosphate biosynthesis. Functionally, catalyzes the synthesis of the hydroxymethylpyrimidine phosphate (HMP-P) moiety of thiamine from aminoimidazole ribotide (AIR) in a radical S-adenosyl-L-methionine (SAM)-dependent reaction. This is Phosphomethylpyrimidine synthase from Baumannia cicadellinicola subsp. Homalodisca coagulata.